Reading from the N-terminus, the 101-residue chain is Phosphoribosyl-AMP cyclohydrolase (101 aa).

Residue D71 participates in Mg(2+) binding. C72 serves as a coordination point for Zn(2+). 2 residues coordinate Mg(2+): D73 and D75. Zn(2+) contacts are provided by C88 and C95.

It belongs to the PRA-CH family. In terms of assembly, homodimer. Requires Mg(2+) as cofactor. It depends on Zn(2+) as a cofactor.

Its subcellular location is the cytoplasm. The catalysed reaction is 1-(5-phospho-beta-D-ribosyl)-5'-AMP + H2O = 1-(5-phospho-beta-D-ribosyl)-5-[(5-phospho-beta-D-ribosylamino)methylideneamino]imidazole-4-carboxamide. It participates in amino-acid biosynthesis; L-histidine biosynthesis; L-histidine from 5-phospho-alpha-D-ribose 1-diphosphate: step 3/9. Functionally, catalyzes the hydrolysis of the adenine ring of phosphoribosyl-AMP. The polypeptide is Phosphoribosyl-AMP cyclohydrolase (Bacillus cereus (strain ZK / E33L)).